Here is a 604-residue protein sequence, read N- to C-terminus: Glutamine--fructose-6-phosphate aminotransferase [isomerizing] (604 aa).

Catalysis depends on Cys2, which acts as the Nucleophile; for GATase activity. The Glutamine amidotransferase type-2 domain occupies 2 to 218 (CGIVGVVGNR…DKELVILTKD (217 aa)). SIS domains lie at 284–423 (IITS…ANGK) and 456–594 (VQAL…VDKP). The For Fru-6P isomerization activity role is filled by Lys599.

As to quaternary structure, homodimer.

Its subcellular location is the cytoplasm. It catalyses the reaction D-fructose 6-phosphate + L-glutamine = D-glucosamine 6-phosphate + L-glutamate. Functionally, catalyzes the first step in hexosamine metabolism, converting fructose-6P into glucosamine-6P using glutamine as a nitrogen source. This Streptococcus pyogenes serotype M18 (strain MGAS8232) protein is Glutamine--fructose-6-phosphate aminotransferase [isomerizing].